A 278-amino-acid chain; its full sequence is Secoisolariciresinol dehydrogenase (278 aa).

Residues 23–28, D47, V73, and N99 each bind NAD(+); that span reads GGAGGI. Substrate contacts are provided by S104 and S164. Residue Y167 is the Proton donor/acceptor of the active site. Residues K171 and V200 each contribute to the NAD(+) site.

The protein belongs to the short-chain dehydrogenases/reductases (SDR) family. In terms of assembly, homotetramer.

The catalysed reaction is (-)-secoisolariciresinol + 2 NAD(+) = (-)-matairesinol + 2 NADH + 2 H(+). Oxidoreductase involved in lignan biosynthesis. Catalyzes the stereospecific conversion of (-)-secoisolariciresinol to (-)-matairesinol via a lactol intermediate. In Podophyllum peltatum (American mandrake), this protein is Secoisolariciresinol dehydrogenase.